The primary structure comprises 101 residues: NADH-quinone oxidoreductase subunit K (101 aa).

3 consecutive transmembrane segments (helical) span residues 4-24, 30-50, and 61-81; these read LTHY…GIFM, LVLL…FIAF, and IFVF…LAIM.

This sequence belongs to the complex I subunit 4L family. NDH-1 is composed of 14 different subunits. Subunits NuoA, H, J, K, L, M, N constitute the membrane sector of the complex.

It is found in the cell inner membrane. It carries out the reaction a quinone + NADH + 5 H(+)(in) = a quinol + NAD(+) + 4 H(+)(out). In terms of biological role, NDH-1 shuttles electrons from NADH, via FMN and iron-sulfur (Fe-S) centers, to quinones in the respiratory chain. The immediate electron acceptor for the enzyme in this species is believed to be ubiquinone. Couples the redox reaction to proton translocation (for every two electrons transferred, four hydrogen ions are translocated across the cytoplasmic membrane), and thus conserves the redox energy in a proton gradient. In Neisseria meningitidis serogroup B (strain ATCC BAA-335 / MC58), this protein is NADH-quinone oxidoreductase subunit K.